The chain runs to 143 residues: Endoribonuclease YbeY (143 aa).

Residues histidine 109, histidine 113, and histidine 119 each coordinate Zn(2+).

This sequence belongs to the endoribonuclease YbeY family. It depends on Zn(2+) as a cofactor.

It localises to the cytoplasm. Functionally, single strand-specific metallo-endoribonuclease involved in late-stage 70S ribosome quality control and in maturation of the 3' terminus of the 16S rRNA. This Carboxydothermus hydrogenoformans (strain ATCC BAA-161 / DSM 6008 / Z-2901) protein is Endoribonuclease YbeY.